We begin with the raw amino-acid sequence, 628 residues long: Biosynthetic arginine decarboxylase (628 aa).

At Lys99 the chain carries N6-(pyridoxal phosphate)lysine. 279–289 serves as a coordination point for substrate; the sequence is VDVGGGLGIDY.

Belongs to the Orn/Lys/Arg decarboxylase class-II family. SpeA subfamily. Mg(2+) serves as cofactor. Requires pyridoxal 5'-phosphate as cofactor.

The enzyme catalyses L-arginine + H(+) = agmatine + CO2. In terms of biological role, catalyzes the biosynthesis of agmatine from arginine. The sequence is that of Biosynthetic arginine decarboxylase from Xylella fastidiosa (strain 9a5c).